The primary structure comprises 384 residues: Galactokinase (384 aa).

A substrate-binding site is contributed by 35 to 38; that stretch reads EHTD. Residues S69 and 125-131 contribute to the ATP site; that span reads GAGLSSS. S131 and E163 together coordinate Mg(2+). D175 functions as the Proton acceptor in the catalytic mechanism. Y224 provides a ligand contact to substrate.

It belongs to the GHMP kinase family. GalK subfamily.

It localises to the cytoplasm. It carries out the reaction alpha-D-galactose + ATP = alpha-D-galactose 1-phosphate + ADP + H(+). It functions in the pathway carbohydrate metabolism; galactose metabolism. Catalyzes the transfer of the gamma-phosphate of ATP to D-galactose to form alpha-D-galactose-1-phosphate (Gal-1-P). The protein is Galactokinase of Aliivibrio fischeri (strain MJ11) (Vibrio fischeri).